Reading from the N-terminus, the 341-residue chain is DNA-directed RNA polymerase subunit alpha (341 aa).

The segment at 1–233 is alpha N-terminal domain (alpha-NTD); the sequence is MLKDGTSVSN…DLLSPFLHTK (233 aa). Positions 262–341 are alpha C-terminal domain (alpha-CTD); it reads SEGDFFKNTF…NEKPRVVGDE (80 aa).

The protein belongs to the RNA polymerase alpha chain family. In plastids the minimal PEP RNA polymerase catalytic core is composed of four subunits: alpha, beta, beta', and beta''. When a (nuclear-encoded) sigma factor is associated with the core the holoenzyme is formed, which can initiate transcription.

It is found in the plastid. The protein resides in the chloroplast. It catalyses the reaction RNA(n) + a ribonucleoside 5'-triphosphate = RNA(n+1) + diphosphate. Its function is as follows. DNA-dependent RNA polymerase catalyzes the transcription of DNA into RNA using the four ribonucleoside triphosphates as substrates. The sequence is that of DNA-directed RNA polymerase subunit alpha from Marsilea quadrifolia (European water clover).